We begin with the raw amino-acid sequence, 132 residues long: MSRQDVQRLLEEYQLIGELLSSLQAQHATVAELLEELTTALDGVRLLKGEGGERLVHIGAGLFVKGVFEAKEVLAPLGAGYHAFLDLNNAERILQERIEEYSKLKTSLEENIEKLAERAAQIRQALERLGIR.

It belongs to the prefoldin subunit alpha family. In terms of assembly, heterohexamer of two alpha and four beta subunits.

The protein resides in the cytoplasm. In terms of biological role, molecular chaperone capable of stabilizing a range of proteins. Seems to fulfill an ATP-independent, HSP70-like function in archaeal de novo protein folding. The polypeptide is Prefoldin subunit alpha (pfdA) (Pyrobaculum aerophilum (strain ATCC 51768 / DSM 7523 / JCM 9630 / CIP 104966 / NBRC 100827 / IM2)).